Consider the following 328-residue polypeptide: Phosphate acyltransferase (328 aa).

Belongs to the PlsX family. As to quaternary structure, homodimer. Probably interacts with PlsY.

It is found in the cytoplasm. The enzyme catalyses a fatty acyl-[ACP] + phosphate = an acyl phosphate + holo-[ACP]. It participates in lipid metabolism; phospholipid metabolism. Its function is as follows. Catalyzes the reversible formation of acyl-phosphate (acyl-PO(4)) from acyl-[acyl-carrier-protein] (acyl-ACP). This enzyme utilizes acyl-ACP as fatty acyl donor, but not acyl-CoA. The chain is Phosphate acyltransferase from Mycoplasma pneumoniae (strain ATCC 29342 / M129 / Subtype 1) (Mycoplasmoides pneumoniae).